A 317-amino-acid chain; its full sequence is Taste receptor type 2 member 14 (317 aa).

Topologically, residues 1–7 are extracellular; the sequence is MGGVIKS. A helical membrane pass occupies residues 8–28; that stretch reads IFTFVLIVEFIIGNLGNSFIA. At 29–55 the chain is on the cytoplasmic side; the sequence is LVNCIDWVKGRKISSVDRILTALAISK. Residues 56–76 form a helical membrane-spanning segment; it reads ISLVWLIFGSWCVSVFFPALF. The Extracellular segment spans residues 77–87; that stretch reads ATEKMFRMLTN. Cholesterol-binding residues include threonine 86 and tryptophan 89. The helical transmembrane segment at 88 to 108 threads the bilayer; the sequence is IWTVINHFSVWLATGLGTFYF. Residues 109 to 129 lie on the Cytoplasmic side of the membrane; sequence LKIANFSNSIFLYLKWRVKKV. A helical membrane pass occupies residues 130 to 150; it reads VLVLLLVTSVFLFLNIALINI. Residues 151–184 lie on the Extracellular side of the membrane; the sequence is HINASINGYRRNKTCSSDSSNFTRFSSLIVLTST. Asparagine 153, asparagine 162, and asparagine 171 each carry an N-linked (GlcNAc...) asparagine glycan. Valine 180 contributes to the cholesterol binding site. A helical transmembrane segment spans residues 185–205; the sequence is VFIFIPFTLSLAMFLLLIFSX. The Cytoplasmic portion of the chain corresponds to 206 to 232; it reads WKHRKKMQHTVKRSGDASTKAHRGVKS. Residues 233–253 traverse the membrane as a helical segment; that stretch reads VXTFFLLYAIFCLSFFISVWT. At 254-261 the chain is on the extracellular side; sequence SERLEENL. The chain crosses the membrane as a helical span at residues 262–282; sequence IILSQVMGMAYPSCHSCVLIL. Cholesterol is bound by residues serine 265 and methionine 268. The Cytoplasmic portion of the chain corresponds to 283–317; it reads GNKKLRQASLSVLLWLRYMFKDGEPSGHKEFRESS.

Belongs to the G-protein coupled receptor T2R family. As to quaternary structure, core component of the TAS2R14-GNAI1 complex, consisting of TAS2R14, GNAI1, GNB1 and GNG2; within the complex interacts with GNAI1. Core component of the TAS2R14-GNAT3 complex, consisting of TAS2R14, GNAT3, GNB1 and GNG2; within the complex interacts with GNAT3. Core component of the TAS2R14-GNAS2 complex, consisting of TAS2R14, GNAS2, GNB1 and GNG2; within the complex interacts with GNAS2.

It is found in the membrane. It catalyses the reaction Ca(2+)(in) = Ca(2+)(out). The enzyme catalyses 3',5'-cyclic AMP(in) = 3',5'-cyclic AMP(out). With respect to regulation, basal activity is enhanced by binding to bitter tastants, such as flufenamic acid and aristolochic acid. Regulated by cholesterol in a concentration-dependent manner. Functionally, gustducin-linked G-protein coupled receptor that plays a role in the perception of bitterness. The activity of this receptor stimulates GNAT3, activating the gustducin G-protein pathway. Likely plays a role in sensing the chemical composition of the gastrointestinal content and other extra-oral tissues via the inhibitory G-protein pathways. This chain is Taste receptor type 2 member 14 (TAS2R14), found in Pan troglodytes (Chimpanzee).